The primary structure comprises 148 residues: Transcriptional repressor NrdR (148 aa).

The segment at Met1 to Gly22 is disordered. A zinc finger lies at Cys3–Cys34. The ATP-cone domain occupies Leu49–Arg136.

It belongs to the NrdR family. It depends on Zn(2+) as a cofactor.

Its function is as follows. Negatively regulates transcription of bacterial ribonucleotide reductase nrd genes and operons by binding to NrdR-boxes. The polypeptide is Transcriptional repressor NrdR (Deinococcus deserti (strain DSM 17065 / CIP 109153 / LMG 22923 / VCD115)).